Here is a 488-residue protein sequence, read N- to C-terminus: MSIKRSAVHTLALLAAAIFGVVLLLGAIHKDIGFMQMAAVLAVLAIGLFLLTLATAFTTKERLFMAVIYILIACTFLNNAFFAIHLGFFSLFLYRLLLIAAGCLHIFGMVRNRTHIERWHGLQVKGILLFFAFWFIYGLVSLLWAKSVTVGLKYLALLAMGIFFIYLIVMYVQKMERLMIVYAIWLVMTVFLMIIGFYNHITHHHLASSTLYSGPEYKQHYPTSVFFNQNDFATFLSISFFFYITMMKNIKNGYIKAIGLVLSLCALYLIFATGSRASLLGIFAGIAVYIFIVLPPVLKRMAIWLSAAGIALFAVLFASKIYSKFWELFLAPQTLHSFHDRLPSNVARANLLKNAWHFFLDSYGFGVGAGNVSYYLEHYAVYDTDNVAEVHNWLVEILANFGLFIMLGYLSVYAYLIWVLYKFYERKLENQSKLITEGLITAMVSFLVSSISPSSVSNLFFHWVFMALVIAAVNVLRRSRQMPEPMYR.

The next 14 membrane-spanning stretches (helical) occupy residues 7–29 (AVHTLALLAAAIFGVVLLLGAIH), 35–57 (MQMAAVLAVLAIGLFLLTLATAF), 64–86 (FMAVIYILIACTFLNNAFFAIHL), 91–110 (LFLYRLLLIAAGCLHIFGMV), 122–144 (LQVKGILLFFAFWFIYGLVSLLW), 154–173 (YLALLAMGIFFIYLIVMYVQ), 180–202 (IVYAIWLVMTVFLMIIGFYNHIT), 222–244 (PTSVFFNQNDFATFLSISFFFYI), 257–274 (AIGLVLSLCALYLIFATG), 279–298 (LLGIFAGIAVYIFIVLPPVL), 303–322 (IWLSAAGIALFAVLFASKIY), 354–376 (NAWHFFLDSYGFGVGAGNVSYYL), 397–419 (ILANFGLFIMLGYLSVYAYLIWV), and 459–476 (LFFHWVFMALVIAAVNVL).

It localises to the cell membrane. It functions in the pathway cell wall biogenesis; teichuronic acid biosynthesis. Its function is as follows. Might be involved in the polymerization of teichuronic acid repeating units after their translocation to the outer surface of the membrane. The protein is Teichuronic acid biosynthesis protein TuaE (tuaE) of Bacillus subtilis (strain 168).